Consider the following 833-residue polypeptide: Leucine--tRNA ligase (833 aa).

The 'HIGH' region signature appears at 41-52 (PYPSGAGLHVGH). The 'KMSKS' region motif lies at 610 to 614 (KMSKS). Lysine 613 is an ATP binding site.

The protein belongs to the class-I aminoacyl-tRNA synthetase family.

It localises to the cytoplasm. The catalysed reaction is tRNA(Leu) + L-leucine + ATP = L-leucyl-tRNA(Leu) + AMP + diphosphate. The chain is Leucine--tRNA ligase from Streptococcus pyogenes serotype M1.